The chain runs to 357 residues: Cyclic AMP-responsive element-binding protein 5 (357 aa).

The segment at R114 to T239 is disordered. 2 stretches are compositionally biased toward basic residues: residues H120–Q129 and P138–H175. Over residues T186 to A195 the composition is skewed to polar residues. A compositionally biased stretch (low complexity) spans T196–Q206. The span at V218–R235 shows a compositional bias: basic and acidic residues. The bZIP domain maps to D224–H287. The basic motif stretch occupies residues R226–K246. The interval L252–L280 is leucine-zipper. A disordered region spans residues E298–S318.

The protein belongs to the bZIP family. Binds DNA as a homodimer or as a heterodimer with JUN or ATF2/CREBP1.

The protein resides in the nucleus. Functionally, binds to the cAMP response element and activates transcription. This chain is Cyclic AMP-responsive element-binding protein 5 (Creb5), found in Mus musculus (Mouse).